Consider the following 498-residue polypeptide: Serine hydroxymethyltransferase, mitochondrial (498 aa).

Lysine 273 is modified (N6-(pyridoxal phosphate)lysine).

The protein belongs to the SHMT family. As to quaternary structure, homotetramer. The cofactor is pyridoxal 5'-phosphate.

Its subcellular location is the mitochondrion. The enzyme catalyses (6R)-5,10-methylene-5,6,7,8-tetrahydrofolate + glycine + H2O = (6S)-5,6,7,8-tetrahydrofolate + L-serine. Its pathway is one-carbon metabolism; tetrahydrofolate interconversion. Its function is as follows. Interconversion of serine and glycine. The chain is Serine hydroxymethyltransferase, mitochondrial (SHM1) from Kluyveromyces lactis (strain ATCC 8585 / CBS 2359 / DSM 70799 / NBRC 1267 / NRRL Y-1140 / WM37) (Yeast).